A 131-amino-acid polypeptide reads, in one-letter code: Glycine cleavage system H protein (131 aa).

Positions 24 to 106 (IATIGISAFA…YGEGWLLKLR (83 aa)) constitute a Lipoyl-binding domain. K65 is modified (N6-lipoyllysine).

The protein belongs to the GcvH family. The glycine cleavage system is composed of four proteins: P, T, L and H. Requires (R)-lipoate as cofactor.

Functionally, the glycine cleavage system catalyzes the degradation of glycine. The H protein shuttles the methylamine group of glycine from the P protein to the T protein. The protein is Glycine cleavage system H protein of Gloeothece citriformis (strain PCC 7424) (Cyanothece sp. (strain PCC 7424)).